A 467-amino-acid chain; its full sequence is tRNA-2-methylthio-N(6)-dimethylallyladenosine synthase (467 aa).

The segment at 1–20 (MSDDTTQIEPAMAQETSPRA) is disordered. The 121-residue stretch at 23–143 (RKVFVKTYGC…LPNALARVRG (121 aa)) folds into the MTTase N-terminal domain. Positions 32, 68, 106, 184, 188, and 191 each coordinate [4Fe-4S] cluster. A Radical SAM core domain is found at 170–402 (RKRGVSAFLT…QALLSAQQYA (233 aa)). The TRAM domain maps to 405 to 467 (DSMIGRKMDV…TNSLIAQKLA (63 aa)).

Belongs to the methylthiotransferase family. MiaB subfamily. Monomer. It depends on [4Fe-4S] cluster as a cofactor.

Its subcellular location is the cytoplasm. It carries out the reaction N(6)-dimethylallyladenosine(37) in tRNA + (sulfur carrier)-SH + AH2 + 2 S-adenosyl-L-methionine = 2-methylsulfanyl-N(6)-dimethylallyladenosine(37) in tRNA + (sulfur carrier)-H + 5'-deoxyadenosine + L-methionine + A + S-adenosyl-L-homocysteine + 2 H(+). Catalyzes the methylthiolation of N6-(dimethylallyl)adenosine (i(6)A), leading to the formation of 2-methylthio-N6-(dimethylallyl)adenosine (ms(2)i(6)A) at position 37 in tRNAs that read codons beginning with uridine. In Brucella abortus (strain S19), this protein is tRNA-2-methylthio-N(6)-dimethylallyladenosine synthase.